The following is a 265-amino-acid chain: Cell adhesion molecule CEACAM7 (265 aa).

An N-terminal signal peptide occupies residues 1 to 35 (MGSPSACPYRVCIPWQGLLLTASLLTFWNLPNSAQ). The region spanning 36–142 (TNIDVVPFNV…EEVTRQFYVF (107 aa)) is the Ig-like V-type domain. N-linked (GlcNAc...) asparagine glycans are attached at residues N57, N85, N105, N112, N174, N183, and N198. The region spanning 146–233 (PKPSITSNNF…ASRSDPVTLN (88 aa)) is the Ig-like C2-type domain. Residues C168 and C216 are joined by a disulfide bond. S242 carries GPI-anchor amidated serine lipidation. A propeptide spans 243–265 (SPDLSAGTAVSIMIGVLAGMALI) (removed in mature form).

It belongs to the immunoglobulin superfamily. CEA family. Homodimer. In terms of tissue distribution, expressed in columnar epithelial cells of the colon (at protein level). Strongly down-regulated in colonic adenocarcinomas.

The protein resides in the cell membrane. The protein localises to the apical cell membrane. This is Cell adhesion molecule CEACAM7 from Homo sapiens (Human).